Here is a 211-residue protein sequence, read N- to C-terminus: Neuroendocrine protein 7B2 (211 aa).

A signal peptide spans 1-26 (MVSRMVSTMLSGLLFWLASGWTPAFA). Residues 106-132 (DFSEDQGYPDPPNPCPVGKTDDGCLEN) form a disordered region. Residues Cys-120 and Cys-129 are joined by a disulfide bond. A phosphoserine mark is found at Ser-140 and Ser-204. The interval 173–211 (GGERRKRRSVNPYLQGQRLDNVVAKKSVPHFSDEDKDPE) is disordered.

Belongs to the 7B2 family. In terms of assembly, interacts with PCSK2/PC2 early in the secretory pathway. Dissociation occurs at later stages. Post-translationally, proteolytically cleaved in the Golgi by a furin-like convertase to generate bioactive peptides. In terms of processing, sulfated on tyrosine residues.

It is found in the secreted. Functionally, acts as a molecular chaperone for PCSK2/PC2, preventing its premature activation in the regulated secretory pathway. Binds to inactive PCSK2 in the endoplasmic reticulum and facilitates its transport from there to later compartments of the secretory pathway where it is proteolytically matured and activated. Also required for cleavage of PCSK2 but does not appear to be involved in its folding. Plays a role in regulating pituitary hormone secretion. The C-terminal peptide inhibits PCSK2 in vitro. This chain is Neuroendocrine protein 7B2 (SCG5), found in Pan troglodytes (Chimpanzee).